The sequence spans 233 residues: Large ribosomal subunit protein uL1 (233 aa).

Belongs to the universal ribosomal protein uL1 family. Part of the 50S ribosomal subunit.

Its function is as follows. Binds directly to 23S rRNA. The L1 stalk is quite mobile in the ribosome, and is involved in E site tRNA release. Functionally, protein L1 is also a translational repressor protein, it controls the translation of the L11 operon by binding to its mRNA. The chain is Large ribosomal subunit protein uL1 from Polynucleobacter necessarius subsp. necessarius (strain STIR1).